Reading from the N-terminus, the 290-residue chain is ATP synthase gamma chain (290 aa).

The protein belongs to the ATPase gamma chain family. As to quaternary structure, F-type ATPases have 2 components, CF(1) - the catalytic core - and CF(0) - the membrane proton channel. CF(1) has five subunits: alpha(3), beta(3), gamma(1), delta(1), epsilon(1). CF(0) has three main subunits: a, b and c.

It is found in the cell inner membrane. Its function is as follows. Produces ATP from ADP in the presence of a proton gradient across the membrane. The gamma chain is believed to be important in regulating ATPase activity and the flow of protons through the CF(0) complex. The polypeptide is ATP synthase gamma chain (Chlorobium luteolum (strain DSM 273 / BCRC 81028 / 2530) (Pelodictyon luteolum)).